A 922-amino-acid polypeptide reads, in one-letter code: GPI inositol-deacylase (922 aa).

Residues 1–11 (MFLHSVNLWNL) are Cytoplasmic-facing. A helical transmembrane segment spans residues 12 to 32 (AFYVFMVFLATLGLWDVFFGF). The Lumenal segment spans residues 33-597 (EENKCSMSYM…GQVVRFHGGA (565 aa)). Ser174 is a catalytic residue. N-linked (GlcNAc...) asparagine glycans are attached at residues Asn363, Asn402, and Asn558. Residues 598 to 618 (LPAYVVSSILLAYGGQLYSLL) traverse the membrane as a helical segment. At 619-641 (STGFCLEYGTMLDKEAKPYKVDP) the chain is on the cytoplasmic side. A helical membrane pass occupies residues 642–662 (FVIMIKFLLGYKWFKELWDAV). The Lumenal portion of the chain corresponds to 663 to 668 (LLPELD). A helical transmembrane segment spans residues 669–689 (AIVLTSQSMCFPLVSLILFLF). The Cytoplasmic portion of the chain corresponds to 690–694 (GTCTA). Residues 695–715 (YWSGLLSSASVQLLSSLWLAL) traverse the membrane as a helical segment. Residues 716-733 (KRPAELPKDVKVMSPDLP) are Lumenal-facing. Residues 734-754 (VLTVVFLIISWTTCGALAILL) traverse the membrane as a helical segment. Residues 755–816 (SYLYYVFKVV…NDAEDSLRMH (62 aa)) lie on the Cytoplasmic side of the membrane. Positions 776–801 (NQPVNPKHSRRSEKKSNHHKDSAIQN) are disordered. Over residues 782–793 (KHSRRSEKKSNH) the composition is skewed to basic residues. The helical transmembrane segment at 817–837 (STVINLLTWVVLLSMPSLIYW) threads the bilayer. Residues 838-853 (SKNLRYYFKLNPDPCK) lie on the Lumenal side of the membrane. The helical transmembrane segment at 854–874 (PLAFLLIPAIAVLGNTHTVSI) threads the bilayer. Topologically, residues 875–894 (KSSKLLKTASQFPLPLAVGV) are cytoplasmic. A helical transmembrane segment spans residues 895–915 (IAFGSSHLYRVPCFVIIPLVF). Over 916–922 (HSLCNFM) the chain is Lumenal.

This sequence belongs to the GPI inositol-deacylase family.

It is found in the endoplasmic reticulum membrane. Its function is as follows. GPI inositol-deacylase that catalyzes the remove of the acyl chain linked to the 2-OH position of inositol ring from the GPI-anchored protein (GPI-AP) in the endoplasmic reticulum. Initiates the post-attachment remodeling phase of GPI-AP biogenesis and participates in endoplasmic reticulum (ER)-to-Golgi transport of GPI-anchored protein. The polypeptide is GPI inositol-deacylase (Rattus norvegicus (Rat)).